A 363-amino-acid polypeptide reads, in one-letter code: MRVDLFDFDLPEESIALRPAEPRDHARLLRVRPGQPFEDRQVFELPDLLQPGDALVFNDTKVIPAQLEGMRERDGNISQVSATLHMRTGPDRWKAFLRPGKRVKEGDRIRFGHSGSSCFLGTLDATVAEKGDAGEALLVFDLSGAMLDEAIASVGHIPLPPYIASKRAEDERDRKDYQTVYAREEGAVAAPTAGLHFTPDLLEKIKAKGVEEHFVTLHVGAGTFLPVKADDTTDHKMHSEIGYVSQRTADALNAVHERGGKIICVGTTSLRLIESAAGEDGIIRPWAGATDIFITPGYKFRAVDLLMTNFHLPRSTLFMLVSAFSGFETMHAAYEHAISNGYRFYSYGDASLLERADKAKDTA.

Belongs to the QueA family. In terms of assembly, monomer.

It is found in the cytoplasm. The enzyme catalyses 7-aminomethyl-7-carbaguanosine(34) in tRNA + S-adenosyl-L-methionine = epoxyqueuosine(34) in tRNA + adenine + L-methionine + 2 H(+). Its pathway is tRNA modification; tRNA-queuosine biosynthesis. Transfers and isomerizes the ribose moiety from AdoMet to the 7-aminomethyl group of 7-deazaguanine (preQ1-tRNA) to give epoxyqueuosine (oQ-tRNA). This chain is S-adenosylmethionine:tRNA ribosyltransferase-isomerase, found in Brucella anthropi (strain ATCC 49188 / DSM 6882 / CCUG 24695 / JCM 21032 / LMG 3331 / NBRC 15819 / NCTC 12168 / Alc 37) (Ochrobactrum anthropi).